The primary structure comprises 362 residues: MKELEVRTASSAYPVYIGEGIRKQAAALLSSLNRPLTKILLIIDAEVDRLYGDEMFRLLNETWPVKKVIVPSGEEAKSLKEYERIQTEAIAFHMDRSSCMIAFGGGVTGDLAGFCAATFMRGIDFIQMPTTLLAHDSAVGGKVAVNHKLGKNLIGAFYQPKAVIYDTELLKTLPEQELRSGMAEVIKHAFIADHAFLEKLLTFDTLQGLTSAELNEMIYKGISIKSAVVREDEKEEGIRAFLNFGHTLGHAVEAEYGYGRITHGDAVALGMQFALYVSEQVARCKMNRKELTQWLIGLGYPGSIRQDIETPVLSARMMNDKKTRGGMTQFIVLKELGEARDCMLSKDELENLLNKWRMEETA.

NAD(+)-binding positions include 72–77, 106–110, 130–131, K142, and K151; these read SGEEAK, GVTGD, and TT. The Zn(2+) site is built by E184, H246, and H263.

It belongs to the sugar phosphate cyclases superfamily. Dehydroquinate synthase family. The cofactor is Co(2+). Requires Zn(2+) as cofactor. NAD(+) serves as cofactor.

The protein resides in the cytoplasm. The catalysed reaction is 7-phospho-2-dehydro-3-deoxy-D-arabino-heptonate = 3-dehydroquinate + phosphate. The protein operates within metabolic intermediate biosynthesis; chorismate biosynthesis; chorismate from D-erythrose 4-phosphate and phosphoenolpyruvate: step 2/7. In terms of biological role, catalyzes the conversion of 3-deoxy-D-arabino-heptulosonate 7-phosphate (DAHP) to dehydroquinate (DHQ). This Bacillus velezensis (strain DSM 23117 / BGSC 10A6 / LMG 26770 / FZB42) (Bacillus amyloliquefaciens subsp. plantarum) protein is 3-dehydroquinate synthase.